The following is a 52-amino-acid chain: MPQMSPMMWFSLFIMFSMTMMLFNQLNFFSYKPNKIMSSNNKIKKKNINWMW.

A helical transmembrane segment spans residues 7-23; that stretch reads MMWFSLFIMFSMTMMLF.

This sequence belongs to the ATPase protein 8 family. As to quaternary structure, F-type ATPases have 2 components, CF(1) - the catalytic core - and CF(0) - the membrane proton channel.

The protein localises to the mitochondrion membrane. In terms of biological role, mitochondrial membrane ATP synthase (F(1)F(0) ATP synthase or Complex V) produces ATP from ADP in the presence of a proton gradient across the membrane which is generated by electron transport complexes of the respiratory chain. F-type ATPases consist of two structural domains, F(1) - containing the extramembraneous catalytic core and F(0) - containing the membrane proton channel, linked together by a central stalk and a peripheral stalk. During catalysis, ATP synthesis in the catalytic domain of F(1) is coupled via a rotary mechanism of the central stalk subunits to proton translocation. Part of the complex F(0) domain. Minor subunit located with subunit a in the membrane. This chain is ATP synthase protein 8 (MT-ATP8), found in Locusta migratoria (Migratory locust).